We begin with the raw amino-acid sequence, 888 residues long: Inactive deaminase YJL070C (888 aa).

The segment at M1 to P42 is disordered. At S9 the chain carries Phosphoserine. A compositionally biased stretch (basic and acidic residues) spans N23–S34. Phosphoserine occurs at positions 41, 178, and 180.

It belongs to the metallo-dependent hydrolases superfamily. Adenosine and AMP deaminases family.

The protein is Inactive deaminase YJL070C of Saccharomyces cerevisiae (strain ATCC 204508 / S288c) (Baker's yeast).